Consider the following 462-residue polypeptide: Tubulin gamma-1 chain (462 aa).

Ala142 to Gly148 provides a ligand contact to GTP.

It belongs to the tubulin family.

The protein localises to the cytoplasm. It localises to the cytoskeleton. The protein resides in the microtubule organizing center. It is found in the centrosome. Functionally, tubulin is the major constituent of microtubules. The gamma chain is found at microtubule organizing centers (MTOC) such as the spindle poles or the centrosome, suggesting that it is involved in the minus-end nucleation of microtubule assembly. The sequence is that of Tubulin gamma-1 chain from Euplotes crassus.